Reading from the N-terminus, the 206-residue chain is Imidazole glycerol phosphate synthase subunit HisH (206 aa).

The region spanning 5 to 206 is the Glutamine amidotransferase type-1 domain; the sequence is SVVVLDYGSG…AVLRNWIERL (202 aa). Cys83 serves as the catalytic Nucleophile. Active-site residues include His187 and Glu189.

In terms of assembly, heterodimer of HisH and HisF.

Its subcellular location is the cytoplasm. The catalysed reaction is 5-[(5-phospho-1-deoxy-D-ribulos-1-ylimino)methylamino]-1-(5-phospho-beta-D-ribosyl)imidazole-4-carboxamide + L-glutamine = D-erythro-1-(imidazol-4-yl)glycerol 3-phosphate + 5-amino-1-(5-phospho-beta-D-ribosyl)imidazole-4-carboxamide + L-glutamate + H(+). It catalyses the reaction L-glutamine + H2O = L-glutamate + NH4(+). It participates in amino-acid biosynthesis; L-histidine biosynthesis; L-histidine from 5-phospho-alpha-D-ribose 1-diphosphate: step 5/9. Functionally, IGPS catalyzes the conversion of PRFAR and glutamine to IGP, AICAR and glutamate. The HisH subunit catalyzes the hydrolysis of glutamine to glutamate and ammonia as part of the synthesis of IGP and AICAR. The resulting ammonia molecule is channeled to the active site of HisF. The chain is Imidazole glycerol phosphate synthase subunit HisH from Mycolicibacterium paratuberculosis (strain ATCC BAA-968 / K-10) (Mycobacterium paratuberculosis).